The following is a 417-amino-acid chain: Citrate synthase-related protein DDB_G0287281 (417 aa).

The tract at residues 284–317 (NKNNNNNNNNNNNNNNNNNNNNNNNNSEDDDDDN) is disordered. The segment covering 286–309 (NNNNNNNNNNNNNNNNNNNNNNNN) has biased composition (low complexity).

Belongs to the citrate synthase family.

The polypeptide is Citrate synthase-related protein DDB_G0287281 (Dictyostelium discoideum (Social amoeba)).